A 317-amino-acid polypeptide reads, in one-letter code: Melanocyte-stimulating hormone receptor (317 aa).

The disordered stretch occupies residues 1–23; that stretch reads MSGQGPQRRLLGSPNATSPTTPH. At 1–37 the chain is on the extracellular side; the sequence is MSGQGPQRRLLGSPNATSPTTPHFKLAANQTGPRCLE. N-linked (GlcNAc...) asparagine glycosylation occurs at Asn-29. Residues 38–63 form a helical membrane-spanning segment; the sequence is VSIPNGLFLSLGLVSVVENVLVVAAI. Over 64-72 the chain is Cytoplasmic; it reads AKNRNLHSP. A helical transmembrane segment spans residues 73 to 93; that stretch reads MYYFIGCLAVSDLLVSVTNVL. The Extracellular segment spans residues 94–118; it reads ETAVMLLVEAGALAAQAAVVQQLDD. The chain crosses the membrane as a helical span at residues 119-140; it reads IIDVLICGSMVSSLCFLGAIAV. The Cytoplasmic segment spans residues 141-163; the sequence is DRYLSIFYALRYHSIVTLPRAWR. Residues 164–183 form a helical membrane-spanning segment; sequence AISAIWVASVLSSTLFIAYY. Residues 184 to 191 are Extracellular-facing; it reads NHTAVLLC. The chain crosses the membrane as a helical span at residues 192–211; the sequence is LVSFFVAMLVLMAVLYVHML. The Cytoplasmic portion of the chain corresponds to 212–240; the sequence is ARARQHARGIARLRKRQHSVHQGFGLKGA. Residues 241 to 266 traverse the membrane as a helical segment; the sequence is ATLTILLGIFFLCWGPFFLHLSLMVL. Over 267–279 the chain is Extracellular; it reads CPQHPICGCVFQN. Residues 280–300 traverse the membrane as a helical segment; the sequence is FNLFLTLIICNSIIDPFIYAF. The Cytoplasmic portion of the chain corresponds to 301–317; the sequence is RSQELRKTLQEVVLCSW. Cys-315 is lipidated: S-palmitoyl cysteine.

Belongs to the G-protein coupled receptor 1 family. Interacts with MGRN1, but does not undergo MGRN1-mediated ubiquitination; this interaction competes with GNAS-binding and thus inhibits agonist-induced cAMP production. Interacts with OPN3; the interaction results in a decrease in MC1R-mediated cAMP signaling and ultimately a decrease in melanin production in melanocytes.

The protein resides in the cell membrane. Its function is as follows. Receptor for MSH (alpha, beta and gamma) and ACTH. The activity of this receptor is mediated by G proteins which activate adenylate cyclase. Mediates melanogenesis, the production of eumelanin (black/brown) and phaeomelanin (red/yellow), via regulation of cAMP signaling in melanocytes. The protein is Melanocyte-stimulating hormone receptor (MC1R) of Vulpes vulpes (Red fox).